A 196-amino-acid chain; its full sequence is ATP-dependent Clp protease proteolytic subunit (196 aa).

Catalysis depends on Ser-101, which acts as the Nucleophile. Residue His-126 is part of the active site.

This sequence belongs to the peptidase S14 family. In terms of assembly, component of the chloroplastic Clp protease core complex.

The protein resides in the plastid. Its subcellular location is the chloroplast stroma. It carries out the reaction Hydrolysis of proteins to small peptides in the presence of ATP and magnesium. alpha-casein is the usual test substrate. In the absence of ATP, only oligopeptides shorter than five residues are hydrolyzed (such as succinyl-Leu-Tyr-|-NHMec, and Leu-Tyr-Leu-|-Tyr-Trp, in which cleavage of the -Tyr-|-Leu- and -Tyr-|-Trp bonds also occurs).. In terms of biological role, cleaves peptides in various proteins in a process that requires ATP hydrolysis. Has a chymotrypsin-like activity. Plays a major role in the degradation of misfolded proteins. The chain is ATP-dependent Clp protease proteolytic subunit from Lobularia maritima (Sweet alyssum).